The following is a 188-amino-acid chain: Elongation factor P (188 aa).

This sequence belongs to the elongation factor P family.

It is found in the cytoplasm. The protein operates within protein biosynthesis; polypeptide chain elongation. Its function is as follows. Involved in peptide bond synthesis. Stimulates efficient translation and peptide-bond synthesis on native or reconstituted 70S ribosomes in vitro. Probably functions indirectly by altering the affinity of the ribosome for aminoacyl-tRNA, thus increasing their reactivity as acceptors for peptidyl transferase. In Ureaplasma parvum serovar 3 (strain ATCC 700970), this protein is Elongation factor P (efp).